We begin with the raw amino-acid sequence, 630 residues long: Low affinity heme transporter str3 (630 aa).

Residues 1–26 are compositionally biased toward basic and acidic residues; that stretch reads MEAKETHSISDHEVELQDAKPEEKSE. The interval 1–51 is disordered; sequence MEAKETHSISDHEVELQDAKPEEKSENGNFVFEKAFSSDEEKGSGYNTNET. The Cytoplasmic portion of the chain corresponds to 1–79; that stretch reads MEAKETHSIS…VRDSIYQNKR (79 aa). Phosphoserine occurs at positions 10 and 38. A helical membrane pass occupies residues 80–100; the sequence is GMYLAYAFGIAILACSWASAI. Residues 101-120 lie on the Extracellular side of the membrane; that stretch reads QSSTTYSYQVYATASFNRTS. A helical membrane pass occupies residues 121 to 141; the sequence is MISTLEIATAIISSVCKPILG. At 142–154 the chain is on the cytoplasmic side; the sequence is KFSDITSRPMTYT. The chain crosses the membrane as a helical span at residues 155–175; that stretch reads LVLLFYVIGFIVVASSSTISA. A topological domain (extracellular) is located at residue tyrosine 176. A helical membrane pass occupies residues 177-197; sequence VIGSVFISIGSSGLDYLNTLV. The Cytoplasmic segment spans residues 198–208; sequence VGDLTSLKWRG. The helical transmembrane segment at 209-229 threads the bilayer; it reads FMTALLSTPYIATVWFTGFIV. The Extracellular segment spans residues 230-241; that stretch reads QGIIDSNWRWGY. Residues 242 to 262 traverse the membrane as a helical segment; it reads GMFAIIMPAVMTPAVIILMYL. Over 263–302 the chain is Cytoplasmic; that stretch reads ERQANKDENIKKIINYQTEEKNKNKQSKWQKLWKAVLEVD. A helical transmembrane segment spans residues 303-323; the sequence is LFGLILLGVGWSILLLPFSLT. The Extracellular segment spans residues 324–335; the sequence is SYAKNGWKNPSM. A helical transmembrane segment spans residues 336 to 356; that stretch reads IAMMVVGGVILIAYSGYEMFI. Over 357 to 370 the chain is Cytoplasmic; it reads APYPSCPRRVMNRT. Residues 371-391 traverse the membrane as a helical segment; sequence FITAVIIDFFYYLAGYLQSMY. Residues 392–406 are Extracellular-facing; the sequence is FTTYTWILYDWSYRD. Residues 407–427 traverse the membrane as a helical segment; sequence WTYFNNTMTIALCVFGVFAGA. The Cytoplasmic portion of the chain corresponds to 428–439; it reads MHRVFHRYKYLQ. A helical membrane pass occupies residues 440 to 460; it reads IIGLVIKIVGYGILIRPNFAA. Residues 461–465 are Extracellular-facing; it reads TGKVD. A helical transmembrane segment spans residues 466–486; it reads LAWSLILIGMGGSFSVVGSQV. Residues 487 to 502 lie on the Cytoplasmic side of the membrane; sequence SCQASVPHQDLAIASS. Residues 503–523 traverse the membrane as a helical segment; that stretch reads LLPLYTNIGGAIGAAIASPIF. The interval 522-576 is heme binding; it reads IFSNKVPKYLREYLPSSINDTQVYNFYSDSSLIREYPVGTEIRDGAIKAYSRSMF. Residues 524-574 lie on the Extracellular side of the membrane; sequence SNKVPKYLREYLPSSINDTQVYNFYSDSSLIREYPVGTEIRDGAIKAYSRS. Residues 575–595 traverse the membrane as a helical segment; the sequence is MFFLLVPAVSLSFIPLAAAFW. Residues 596-630 lie on the Cytoplasmic side of the membrane; that stretch reads QSNFYLGNQQNAVEGDQDHKKKGDKETTQEEKIII. The disordered stretch occupies residues 610–630; the sequence is GDQDHKKKGDKETTQEEKIII. Basic and acidic residues predominate over residues 611–630; sequence DQDHKKKGDKETTQEEKIII.

This sequence belongs to the major facilitator superfamily.

The protein localises to the cell membrane. Its function is as follows. Low affinity heme transporter involved in the assimilation of exogenous heme during conditions of low cellular iron. The protein is Low affinity heme transporter str3 of Schizosaccharomyces pombe (strain 972 / ATCC 24843) (Fission yeast).